The following is a 515-amino-acid chain: MDEFHRCGKEDSFWQQCFLYPLFFKEDLYAISHDHYLDVSSSSRPMEHLSSNDQLSFLTVKRLIGQIRKQNHSIVLFVNCDPNPLADRKKSSYSESVLEALTLVLEVPFSIWSKYSVEGMNESKSFRSIHSIFPFLEDKFPHSNSILDARIPYSIHPEILVRTFRRWIRDAPSLHPLRSVLYEYRNSTENLQRSIIVVPRVNTRFFLFLWNYYVCECESILFSRLKRSSHSRSLSHGSFPQRTHFHRKIKHIIIFSRRNSLKSIWSLKDPKIHYVRYGERPIIAIKGAHLLVKKCRYYLLIFRQFYFHLWSEPYRVCSHQLSKNCSSSPGYFLRVRMNPILVRTKMLDELFIADLITDEIDPIVPIVPIIGLLATEKFCDISGRPISKLSWTSLTDDDILDRFDQIWRNLFHYYSGSFDRDGLYRIKYILSLSCAKTLACKHKSTIRVVRKELGPELFKKSFSKEREFDSLRFSSKAAARSQRERIWHSDIPQINPLANSWQKIQDLKIENLFDQ.

This sequence belongs to the intron maturase 2 family. MatK subfamily.

It localises to the plastid. It is found in the chloroplast. In terms of biological role, usually encoded in the trnK tRNA gene intron. Probably assists in splicing its own and other chloroplast group II introns. This Pinus banksiana (Jack pine) protein is Maturase K.